Consider the following 169-residue polypeptide: Der GTPase-activating protein YihI (169 aa).

Disordered stretches follow at residues 1–99 (MKPS…QAEL) and 146–169 (SYDD…LRGN). A compositionally biased stretch (basic residues) spans 10 to 19 (SKGHAKARRK). Over residues 20 to 30 (TREELDQEARD) the composition is skewed to basic and acidic residues. Positions 31–40 (RKRQKKRRGH) are enriched in basic residues. Residues 49 to 58 (GNTTSGSKGQ) are compositionally biased toward polar residues. A compositionally biased stretch (acidic residues) spans 147–159 (YDDDEEEEEDEKQ). A compositionally biased stretch (basic and acidic residues) spans 160-169 (EDMMRLLRGN).

It belongs to the YihI family. In terms of assembly, interacts with Der.

Functionally, a GTPase-activating protein (GAP) that modifies Der/EngA GTPase function. May play a role in ribosome biogenesis. This Escherichia coli O45:K1 (strain S88 / ExPEC) protein is Der GTPase-activating protein YihI.